The sequence spans 328 residues: D-cysteine desulfhydrase (328 aa).

Lys-51 is subject to N6-(pyridoxal phosphate)lysine.

Belongs to the ACC deaminase/D-cysteine desulfhydrase family. As to quaternary structure, homodimer. Pyridoxal 5'-phosphate is required as a cofactor.

The enzyme catalyses D-cysteine + H2O = hydrogen sulfide + pyruvate + NH4(+) + H(+). Its function is as follows. Catalyzes the alpha,beta-elimination reaction of D-cysteine and of several D-cysteine derivatives. It could be a defense mechanism against D-cysteine. In Escherichia coli (strain SMS-3-5 / SECEC), this protein is D-cysteine desulfhydrase.